Reading from the N-terminus, the 111-residue chain is Large ribosomal subunit protein uL23 (111 aa).

It belongs to the universal ribosomal protein uL23 family. Part of the 50S ribosomal subunit. Contacts protein L29, and trigger factor when it is bound to the ribosome.

Functionally, one of the early assembly proteins it binds 23S rRNA. One of the proteins that surrounds the polypeptide exit tunnel on the outside of the ribosome. Forms the main docking site for trigger factor binding to the ribosome. The chain is Large ribosomal subunit protein uL23 from Nitrosospira multiformis (strain ATCC 25196 / NCIMB 11849 / C 71).